The sequence spans 537 residues: Fucosyltransferase 6 (537 aa).

Residues 1–20 (MYHIFQISSEVFRAFGLKMK) are Cytoplasmic-facing. A helical; Signal-anchor for type II membrane protein transmembrane segment spans residues 21–41 (ILLTLVFSGLLIWSVVLVSFS). The Lumenal portion of the chain corresponds to 42-537 (NDFNNQLLVA…NDGLKLFDEL (496 aa)). N-linked (GlcNAc...) asparagine glycosylation is found at Asn54, Asn231, and Asn378.

It belongs to the glycosyltransferase 37 family. As to expression, expressed in roots and flowers.

It is found in the golgi apparatus. The protein resides in the golgi stack membrane. It functions in the pathway protein modification; protein glycosylation. In terms of biological role, may be involved in cell wall biosynthesis. May act as a fucosyltransferase. This is Fucosyltransferase 6 (FUT6) from Arabidopsis thaliana (Mouse-ear cress).